The primary structure comprises 380 residues: Erythronate-4-phosphate dehydrogenase (380 aa).

Substrate-binding residues include Ser-45 and Thr-66. Residues 126 to 127 (QV), Asp-146, Thr-174, 205 to 207 (ASR), and Asp-231 contribute to the NAD(+) site. The active site involves Arg-207. The active site involves Glu-236. His-253 (proton donor) is an active-site residue. Gly-256 is an NAD(+) binding site. Substrate is bound at residue Tyr-257.

This sequence belongs to the D-isomer specific 2-hydroxyacid dehydrogenase family. PdxB subfamily. Homodimer.

It localises to the cytoplasm. It catalyses the reaction 4-phospho-D-erythronate + NAD(+) = (R)-3-hydroxy-2-oxo-4-phosphooxybutanoate + NADH + H(+). Its pathway is cofactor biosynthesis; pyridoxine 5'-phosphate biosynthesis; pyridoxine 5'-phosphate from D-erythrose 4-phosphate: step 2/5. Its function is as follows. Catalyzes the oxidation of erythronate-4-phosphate to 3-hydroxy-2-oxo-4-phosphonooxybutanoate. This Azotobacter vinelandii (strain DJ / ATCC BAA-1303) protein is Erythronate-4-phosphate dehydrogenase.